The primary structure comprises 463 residues: ATP synthase subunit beta (463 aa).

151–158 serves as a coordination point for ATP; sequence GGAGVGKT.

The protein belongs to the ATPase alpha/beta chains family. In terms of assembly, F-type ATPases have 2 components, CF(1) - the catalytic core - and CF(0) - the membrane proton channel. CF(1) has five subunits: alpha(3), beta(3), gamma(1), delta(1), epsilon(1). CF(0) has three main subunits: a(1), b(2) and c(9-12). The alpha and beta chains form an alternating ring which encloses part of the gamma chain. CF(1) is attached to CF(0) by a central stalk formed by the gamma and epsilon chains, while a peripheral stalk is formed by the delta and b chains.

It is found in the cell membrane. The enzyme catalyses ATP + H2O + 4 H(+)(in) = ADP + phosphate + 5 H(+)(out). In terms of biological role, produces ATP from ADP in the presence of a proton gradient across the membrane. The catalytic sites are hosted primarily by the beta subunits. In Clostridium botulinum (strain ATCC 19397 / Type A), this protein is ATP synthase subunit beta.